The primary structure comprises 155 residues: MPKKVGYKRIGVDFRYGDESVARFINAVMLDGKKAVATKIVYDAFAIIAEKLAGEDPLEVYRKAMSHIAPVVEVRSKRVGGATYQIPMEVKASRRGALAFRWLKIYAAKRGGRSMAEKLAAELMDAANEQGASVKKRDEVHRMADANKAFAHFRF.

It belongs to the universal ribosomal protein uS7 family. As to quaternary structure, part of the 30S ribosomal subunit. Contacts proteins S9 and S11.

Functionally, one of the primary rRNA binding proteins, it binds directly to 16S rRNA where it nucleates assembly of the head domain of the 30S subunit. Is located at the subunit interface close to the decoding center, probably blocks exit of the E-site tRNA. The polypeptide is Small ribosomal subunit protein uS7 (Pelodictyon phaeoclathratiforme (strain DSM 5477 / BU-1)).